Consider the following 185-residue polypeptide: Ribosome-recycling factor (185 aa).

The segment at 144–164 (KEGEAGEDEVGRAEKDLDKTT) is disordered.

Belongs to the RRF family.

It is found in the cytoplasm. In terms of biological role, responsible for the release of ribosomes from messenger RNA at the termination of protein biosynthesis. May increase the efficiency of translation by recycling ribosomes from one round of translation to another. This chain is Ribosome-recycling factor, found in Mycobacterium tuberculosis (strain CDC 1551 / Oshkosh).